A 1577-amino-acid polypeptide reads, in one-letter code: Disco-interacting protein 2 homolog B-A (1577 aa).

One can recognise a DMAP1-binding domain in the interval 7–124 (DLAALPKEVR…PMPTKRRSAF (118 aa)). Disordered stretches follow at residues 109-148 (EEKM…GSLR), 173-204 (VQGS…QGQT), 217-239 (DTNS…DRNS), and 253-273 (SRGQ…AHSR). Polar residues predominate over residues 124–140 (FVQSPAENCTPPDTSSA). The span at 176–187 (SSTSSSASSTLS) shows a compositional bias: low complexity. The segment covering 217 to 236 (DTNSSSGSVPPDVTSTAPQD) has biased composition (polar residues).

It belongs to the DIP2 family.

The protein localises to the cell projection. Its subcellular location is the dendrite. It localises to the axon. It is found in the perikaryon. Functionally, negatively regulates axonal outgrowth and is essential for normal synaptic transmission. Not required for regulation of axon polarity. Promotes acetylation of alpha-tubulin. The sequence is that of Disco-interacting protein 2 homolog B-A (dip2ba) from Danio rerio (Zebrafish).